The following is a 185-amino-acid chain: Elongation factor P (185 aa).

It belongs to the elongation factor P family.

The protein localises to the cytoplasm. It participates in protein biosynthesis; polypeptide chain elongation. Functionally, involved in peptide bond synthesis. Stimulates efficient translation and peptide-bond synthesis on native or reconstituted 70S ribosomes in vitro. Probably functions indirectly by altering the affinity of the ribosome for aminoacyl-tRNA, thus increasing their reactivity as acceptors for peptidyl transferase. The sequence is that of Elongation factor P from Nitratidesulfovibrio vulgaris (strain DSM 19637 / Miyazaki F) (Desulfovibrio vulgaris).